The sequence spans 481 residues: Transmembrane protein 39A (481 aa).

Helical transmembrane passes span 74–94 (LFET…YINI), 109–129 (STSL…AVML), 150–170 (LCYV…GWVL), 182–202 (SVLK…LCCL), 278–298 (EVLF…LCFV), 313–333 (LIMV…PPHY), 411–431 (LLNV…YSLL), and 437–457 (NHTL…FKLL).

It belongs to the TMEM39 family.

Its subcellular location is the endoplasmic reticulum membrane. Its function is as follows. Regulates autophagy by controlling the spatial distribution and levels of the intracellular phosphatidylinositol 4-phosphate (PtdIns(4)P) pools. Modulates (PtdIns(4)P) levels by regulating the ER-to-Golgi trafficking of the phosphatidylinositide phosphatase SACM1L. This is Transmembrane protein 39A (tmem39a) from Danio rerio (Zebrafish).